Reading from the N-terminus, the 340-residue chain is Entry-fusion complex protein OPG094 (340 aa).

The interval 1–20 is disordered; that stretch reads MGGGVSVELPKRDPPPGVPT. Gly-2 is lipidated: N-myristoyl glycine; by host. The Virion surface segment spans residues 2 to 319; it reads GGGVSVELPK…VQHNIKHSFD (318 aa). A helical; Signal-anchor for type II membrane protein transmembrane segment spans residues 320 to 340; the sequence is LKLHLISLLSLLVIWILIVAI.

This sequence belongs to the orthopoxvirus OPG086 family. As to quaternary structure, interacts with OPG143. Component of the entry fusion complex (EFC) composed of OPG053, OPG076, OPG086, OPG094, OPG095, OPG099, OPG107, OPG143, OPG104, OPG147 and OPG155. Except for OPG095 and OPG053, each of the EFC proteins is required for assembly or stability of the complex. Unglycosylated because produced in viral factories instead of the classic ER -Golgi route.

It localises to the virion membrane. Functionally, component of the entry fusion complex (EFC), which consists of 11 proteins. During cell infection, this complex mediates entry of the virion core into the host cytoplasm by a two-step mechanism consisting of lipid mixing of the viral and cellular membranes and subsequent pore formation. The polypeptide is Entry-fusion complex protein OPG094 (OPG094) (Vaccinia virus (strain Copenhagen) (VACV)).